The sequence spans 156 residues: MSRRNTAKKRFASPDPLYKSRLVSMLTVRILKSGKKTLSQRIIYQALDIVKERTESDPLNILEKAIRNITPLVEVKARRVGGSTYQVPIEVRAYRGTNLALRWITKFSRDRSGKSMSMKLANEIMDAANETGNSIRKREDTHRMAEANKAFAHYRY.

Belongs to the universal ribosomal protein uS7 family. As to quaternary structure, part of the 30S ribosomal subunit.

It localises to the plastid. Its subcellular location is the chloroplast. In terms of biological role, one of the primary rRNA binding proteins, it binds directly to 16S rRNA where it nucleates assembly of the head domain of the 30S subunit. The polypeptide is Small ribosomal subunit protein uS7c (rps7) (Pyropia yezoensis (Susabi-nori)).